A 322-amino-acid polypeptide reads, in one-letter code: MKQFNEFYQKIATNRLGHWLNTLPAQLSHWHESELHGEFKHWQKTLDALPVVDANSAIDITNTVKVGESGDLDQGQFKRLENLMKKFKPWRKGPYHIHGLHIDTEWRSDFKWDRLAEHISDLSGKYVLDIGCGSGYHLWRMRGAGAKFVVGIDPTQLFLMQFNAIKHFIDDSPVHLLPLGVEQLPELKAFDTVFAMGVLYHRRSPIDFLYQLKAQLVKGGELVLETLIVDGDENTVLVPGERYAKMRNVWFLPSEKAMCAWLERCGFNNVRVVNTDITALDEQRKTEWIDTESLQDFLDPNDSSKTIEGYPAPKRAIFIANA.

Residues K92, W106, K111, G131, 153–155 (DPT), 181–182 (VE), M196, Y200, and R315 each bind carboxy-S-adenosyl-L-methionine.

The protein belongs to the class I-like SAM-binding methyltransferase superfamily. CmoB family. In terms of assembly, homotetramer.

The catalysed reaction is carboxy-S-adenosyl-L-methionine + 5-hydroxyuridine(34) in tRNA = 5-carboxymethoxyuridine(34) in tRNA + S-adenosyl-L-homocysteine + H(+). In terms of biological role, catalyzes carboxymethyl transfer from carboxy-S-adenosyl-L-methionine (Cx-SAM) to 5-hydroxyuridine (ho5U) to form 5-carboxymethoxyuridine (cmo5U) at position 34 in tRNAs. This Colwellia psychrerythraea (strain 34H / ATCC BAA-681) (Vibrio psychroerythus) protein is tRNA U34 carboxymethyltransferase.